A 255-amino-acid chain; its full sequence is Small ribosomal subunit protein eS1 (255 aa).

The segment covering 1-18 has biased composition (basic residues); it reads MAVGKNKRLSKGKKGLKK. Positions 1–28 are disordered; that stretch reads MAVGKNKRLSKGKKGLKKRTQDPFSRKD. Ala-2 carries the N-acetylalanine; partial modification. Residues 19-28 are compositionally biased toward basic and acidic residues; sequence RTQDPFSRKD.

Belongs to the eukaryotic ribosomal protein eS1 family. As to quaternary structure, component of the small ribosomal subunit. Mature ribosomes consist of a small (40S) and a large (60S) subunit. The 40S subunit contains about 33 different proteins and 1 molecule of RNA (18S). The 60S subunit contains about 49 different proteins and 3 molecules of RNA (25S, 5.8S and 5S).

It localises to the cytoplasm. In Ajellomyces capsulatus (strain NAm1 / WU24) (Darling's disease fungus), this protein is Small ribosomal subunit protein eS1.